A 336-amino-acid chain; its full sequence is Ornithine carbamoyltransferase, catabolic (336 aa).

Carbamoyl phosphate contacts are provided by residues 57–60, Q84, R108, and 136–139; these read STRT and HPTQ. Residues N169, D233, and 237-238 contribute to the L-ornithine site; that span reads SM. Residues 275–276 and R322 contribute to the carbamoyl phosphate site; that span reads CL.

Belongs to the aspartate/ornithine carbamoyltransferase superfamily. OTCase family.

It localises to the cytoplasm. It carries out the reaction carbamoyl phosphate + L-ornithine = L-citrulline + phosphate + H(+). The protein operates within amino-acid degradation; L-arginine degradation via ADI pathway; carbamoyl phosphate from L-arginine: step 2/2. In terms of biological role, reversibly catalyzes the transfer of the carbamoyl group from carbamoyl phosphate (CP) to the N(epsilon) atom of ornithine (ORN) to produce L-citrulline. This chain is Ornithine carbamoyltransferase, catabolic, found in Chromobacterium violaceum (strain ATCC 12472 / DSM 30191 / JCM 1249 / CCUG 213 / NBRC 12614 / NCIMB 9131 / NCTC 9757 / MK).